The following is a 499-amino-acid chain: Xylulose kinase (499 aa).

Residue M81–H82 coordinates substrate. D239 acts as the Proton acceptor in catalysis.

The protein belongs to the FGGY kinase family.

The catalysed reaction is D-xylulose + ATP = D-xylulose 5-phosphate + ADP + H(+). Its function is as follows. Catalyzes the phosphorylation of D-xylulose to D-xylulose 5-phosphate. This chain is Xylulose kinase, found in Bacillus subtilis (strain 168).